The sequence spans 239 residues: Ribonuclease PH (239 aa).

Phosphate is bound by residues Arg87 and 125–127 (GTR).

The protein belongs to the RNase PH family. As to quaternary structure, homohexameric ring arranged as a trimer of dimers.

The enzyme catalyses tRNA(n+1) + phosphate = tRNA(n) + a ribonucleoside 5'-diphosphate. Its function is as follows. Phosphorolytic 3'-5' exoribonuclease that plays an important role in tRNA 3'-end maturation. Removes nucleotide residues following the 3'-CCA terminus of tRNAs; can also add nucleotides to the ends of RNA molecules by using nucleoside diphosphates as substrates, but this may not be physiologically important. Probably plays a role in initiation of 16S rRNA degradation (leading to ribosome degradation) during starvation. The protein is Ribonuclease PH of Acaryochloris marina (strain MBIC 11017).